The following is a 467-amino-acid chain: Sialic acid-binding Ig-like lectin 7 (467 aa).

Residues 1-18 (MLLLLLLPLLWGRERVEG) form the signal peptide. The Extracellular segment spans residues 19–353 (QKSNRKDYSL…KMRPVSGVLL (335 aa)). The Ig-like V-type domain maps to 39-122 (GMCVHVRCSF…ARMSDAGRYF (84 aa)). A disulfide bridge connects residues C46 and C106. An N-linked (GlcNAc...) asparagine glycan is attached at N105. Residues R124 and 131 to 135 (KWNYK) contribute to the N-acetylneuraminate site. 2 N-linked (GlcNAc...) asparagine glycosylation sites follow: N142 and N165. Residues 150 to 233 (PNILIPGTLE…AGVTTNRTIQ (84 aa)) enclose the Ig-like C2-type 1 domain. C168 and C217 are joined by a disulfide. 4 N-linked (GlcNAc...) asparagine glycosylation sites follow: N229, N235, N242, and N260. Residues 240 to 336 (PQNLTVTVFQ…GSQHVSLNLS (97 aa)) enclose the Ig-like C2-type 2 domain. C276 and C320 are oxidised to a cystine. N-linked (GlcNAc...) asparagine glycosylation occurs at N334. Residues 354-376 (GAVGGAGATALVFLSFCVIFIVV) traverse the membrane as a helical segment. Topologically, residues 377–467 (RSCRKKSARP…NEYSEIKIPK (91 aa)) are cytoplasmic. The segment covering 401-412 (IRGSASQGNLTE) has biased composition (polar residues). The disordered stretch occupies residues 401–431 (IRGSASQGNLTESWADDNPRHHGLAAHSSGE). S429 carries the post-translational modification Phosphoserine. Positions 435–440 (IQYAPL) match the ITIM motif motif. Positions 443 to 467 (HKGEPQDLSGQEATNNEYSEIKIPK) are disordered. The span at 450–460 (LSGQEATNNEY) shows a compositional bias: polar residues.

It belongs to the immunoglobulin superfamily. SIGLEC (sialic acid binding Ig-like lectin) family. Interacts with PTPN6/SHP-1 upon phosphorylation. Post-translationally, tyrosine phosphorylated. As to expression, predominantly expressed by resting and activated natural killer cells and at lower levels by granulocytes and monocytes. High expression found in placenta, liver, lung, spleen, and peripheral blood leukocytes.

It is found in the membrane. Its function is as follows. Putative adhesion molecule that mediates sialic-acid dependent binding to cells. Preferentially binds to alpha-2,3- and alpha-2,6-linked sialic acid. Also binds disialogangliosides (disialogalactosyl globoside, disialyl lactotetraosylceramide and disialyl GalNAc lactotetraoslylceramide). The sialic acid recognition site may be masked by cis interactions with sialic acids on the same cell surface. In the immune response, may act as an inhibitory receptor upon ligand induced tyrosine phosphorylation by recruiting cytoplasmic phosphatase(s) via their SH2 domain(s) that block signal transduction through dephosphorylation of signaling molecules. Mediates inhibition of natural killer cells cytotoxicity. May play a role in hemopoiesis. Inhibits differentiation of CD34+ cell precursors towards myelomonocytic cell lineage and proliferation of leukemic myeloid cells (in vitro). This Homo sapiens (Human) protein is Sialic acid-binding Ig-like lectin 7 (SIGLEC7).